The chain runs to 226 residues: Transmembrane gamma-carboxyglutamic acid protein 4 (226 aa).

The first 17 residues, 1–17, serve as a signal peptide directing secretion; that stretch reads MFTLLVLLSQLPTVTLG. Residues 18-49 constitute a propeptide that is removed on maturation; sequence FPHCARGPKASKHAGEEVFTSKEEANFFIHRR. The Extracellular segment spans residues 50 to 113; it reads LLYNRFDLEL…KSDGNREKID (64 aa). The Gla domain maps to 52 to 98; it reads YNRFDLELFTPGNLERECNEELCNYEEAREIFVDEDKTIAFWQEYSA. Cysteines 69 and 74 form a disulfide. A 4-carboxyglutamate modification is found at glutamate 72. The helical transmembrane segment at 114–134 threads the bilayer; the sequence is VMGLLTGLIAAGVFLVIFGLL. At 135–226 the chain is on the cytoplasmic side; the sequence is GYYLCITKCN…FKKSMSLPSH (92 aa). Phosphoserine is present on serine 163. An LPXY motif; mediates binding to WW domain-containing proteins motif is present at residues 186–189; it reads LPSY. The PPXY motif; mediates binding to WW domain-containing proteins motif lies at 204–207; sequence PPPY.

Belongs to the commissureless family. As to quaternary structure, interacts (via cytoplasmic domain) with WW domain-containing proteins MAGI1, MAGI3, NEDD4, NEDD4L, WWTR1/TAZ and YAP1. In terms of processing, gamma-carboxyglutamate residues are formed by vitamin K dependent carboxylation. These residues are essential for the binding of calcium. In terms of tissue distribution, widely expressed with highest levels in kidney.

It is found in the endoplasmic reticulum-Golgi intermediate compartment membrane. It localises to the cell membrane. Functionally, may control axon guidance across the CNS. Prevents the delivery of ROBO1 at the cell surface and down-regulates its expression. This is Transmembrane gamma-carboxyglutamic acid protein 4 from Homo sapiens (Human).